The primary structure comprises 881 residues: Plakophilin-2 (881 aa).

The interval 1 to 348 (MAAPGAPAEY…FTDSQLGNAD (348 aa)) is required for interaction with influenza A virus RNA polymerase subunit PB1. The required for binding to single-stranded DNA stretch occupies residues 1–360 (MAAPGAPAEY…MTLERAVSML (360 aa)). Ser44 bears the Phosphoserine mark. Omega-N-methylarginine is present on Arg46. At Ser82 the chain carries Phosphoserine; by MARK3. Phosphoserine occurs at positions 132, 135, 151, 154, 155, 169, and 172. The residue at position 177 (Thr177) is a Phosphothreonine. Ser183, Ser197, Ser251, Ser294, and Ser329 each carry phosphoserine. Residues 282–314 (QNRASRSSWHQSSFHSTRTLREAGPSVAVDSSG) are disordered. Residues 286–297 (SRSSWHQSSFHS) show a composition bias toward low complexity. 8 ARM repeats span residues 341 to 383 (DSQL…ECFQ), 385 to 424 (SEAR…NLVF), 427 to 467 (NDNK…NLRS), 571 to 616 (DGRK…NLSY), 671 to 711 (PKGV…NLTA), 719 to 758 (SVAQ…NLSR), 763 to 804 (QNEI…NIIQ), and 807 to 849 (YQNA…SLWA).

Belongs to the beta-catenin family. Interacts with DSC2. Interacts with JUP. Interacts with KRT5/CK5, KRT8/CK8, KRT14/CK14, KRT18/CK18 and VIM. Interacts (via N-terminus) with MARK3/C-TAK1. Interacts with DSP. Interacts with DSG1, DSG2 and DSG3. Interacts (via N-terminus) with CTNNB1. Interacts with CDH1. Interacts with the RNA polymerase III (Pol III) complex proteins POLR3A/RPC155, POLR3F/RPC39 and POLR3C/RPC82. Interacts with CTNNA3. Interacts (via N-terminus) with SCN5A/Nav1.5. Interacts with ANK3/ANKG and GJA1/CX43. In terms of assembly, (Microbial infection) Interacts (via N-terminus) with influenza A virus RNA polymerase subunit PB1 (via C-terminus); the interaction competitively inhibits the interaction between the subunits PB1 and PB2. As to expression, expressed at intercalated disks in the heart (at protein level). Expressed in gingival epithelial, endothelial and fibroblast cells (at protein level). Faintly expressed in tracheal epithelial cells (at protein level). Widely expressed. Found at desmosomal plaques in simple and stratified epithelia and in non-epithelial tissues such as myocardium and lymph node follicles. In most stratified epithelia found in the desmosomes of the basal cell layer and seems to be absent from suprabasal strata. In terms of tissue distribution, (Microbial infection) Abundantly expressed in tracheal epithelial cells following influenza A virus infection (at protein level).

It localises to the nucleus. The protein resides in the cell junction. Its subcellular location is the desmosome. It is found in the cytoplasm. Functionally, a component of desmosome cell-cell junctions which are required for positive regulation of cellular adhesion. Regulates focal adhesion turnover resulting in changes in focal adhesion size, cell adhesion and cell spreading, potentially via transcriptional modulation of beta-integrins. Required to maintain gingival epithelial barrier function. Important component of the desmosome that is also required for localization of desmosome component proteins such as DSC2, DSG2 and JUP to the desmosome cell-cell junction. Required for the formation of desmosome cell junctions in cardiomyocytes, thereby required for the correct formation of the heart, specifically trabeculation and formation of the atria walls. Loss of desmosome cell junctions leads to mis-localization of DSP and DSG2 resulting in disruption of cell-cell adhesion and disordered intermediate filaments. Modulates profibrotic gene expression in cardiomyocytes via regulation of DSP expression and subsequent activation of downstream TGFB1 and MAPK14/p38 MAPK signaling. Required for cardiac sodium current propagation and electrical synchrony in cardiac myocytes, via ANK3 stabilization and modulation of SCN5A/Nav1.5 localization to cell-cell junctions. Required for mitochondrial function, nuclear envelope integrity and positive regulation of SIRT3 transcription via maintaining DES localization at its nuclear envelope and cell tip anchoring points, and thereby preserving regulation of the transcriptional program. Maintenance of nuclear envelope integrity protects against DNA damage and transcriptional dysregulation of genes, especially those involved in the electron transport chain, thereby preserving mitochondrial function and protecting against superoxide radical anion generation. Binds single-stranded DNA (ssDNA). May regulate the localization of GJA1 to gap junctions in intercalated disks of the heart. Involved in the inhibition of viral infection by influenza A viruses (IAV). Acts as a host restriction factor for IAV viral propagation, potentially via disrupting the interaction of IAV polymerase complex proteins. The chain is Plakophilin-2 from Homo sapiens (Human).